Reading from the N-terminus, the 185-residue chain is Elongation factor P (185 aa).

Belongs to the elongation factor P family.

Its subcellular location is the cytoplasm. The protein operates within protein biosynthesis; polypeptide chain elongation. Functionally, involved in peptide bond synthesis. Stimulates efficient translation and peptide-bond synthesis on native or reconstituted 70S ribosomes in vitro. Probably functions indirectly by altering the affinity of the ribosome for aminoacyl-tRNA, thus increasing their reactivity as acceptors for peptidyl transferase. The sequence is that of Elongation factor P from Streptococcus pyogenes serotype M28 (strain MGAS6180).